The primary structure comprises 110 residues: Large ribosomal subunit protein uL22 (110 aa).

Belongs to the universal ribosomal protein uL22 family. In terms of assembly, part of the 50S ribosomal subunit.

This protein binds specifically to 23S rRNA; its binding is stimulated by other ribosomal proteins, e.g. L4, L17, and L20. It is important during the early stages of 50S assembly. It makes multiple contacts with different domains of the 23S rRNA in the assembled 50S subunit and ribosome. Its function is as follows. The globular domain of the protein is located near the polypeptide exit tunnel on the outside of the subunit, while an extended beta-hairpin is found that lines the wall of the exit tunnel in the center of the 70S ribosome. The sequence is that of Large ribosomal subunit protein uL22 from Nitrosomonas eutropha (strain DSM 101675 / C91 / Nm57).